Consider the following 195-residue polypeptide: L-rhamnose-binding lectin CSL3 (195 aa).

2 SUEL-type lectin domains span residues 1–95 and 105–195; these read AISI…YSCV and ICEG…YTCD.

L-rhamnose binding lectin. Has hemagglutinating activity towards rabbit erythrocytes, human type A erythrocytes, human type B erythrocytes, human type O erythrocytes and sheep erythrocytes. Hemagglutinating activity is inhibited by smooth-type lipopolysaccharide (LPS) from S.flexneri 1A, A.salmonicida and E.coli K12, but not by rough-type LPS from S.flexneri, E.coli K12 and E.coli EH100. Agglutinates E.coli K12 and B.subtilis. In Oncorhynchus keta (Chum salmon), this protein is L-rhamnose-binding lectin CSL3.